The sequence spans 316 residues: Petrobactin import system permease protein YclN (316 aa).

8 helical membrane passes run 5–25, 49–69, 94–114, 133–153, 181–201, 224–244, 268–288, and 290–310; these read YLFI…VEDL, LISI…MQQI, LLLF…VFAL, IFIP…ATFI, LLYL…KFTL, LIIV…LPFL, VLLG…IIFP, and EISI…FMLL.

It belongs to the binding-protein-dependent transport system permease family. FecCD subfamily. The complex is composed of two ATP-binding proteins (YclP), two transmembrane proteins (YclN and YclO) and a solute-binding protein (YclQ).

Its subcellular location is the cell membrane. Functionally, part of the ABC transporter complex YclNOPQ involved in uptake of ferric-petrobactin. Petrobactin is a photoreactive 3,4-catecholate siderophore produced by many members of the B.cereus group, including B.anthracis. Probably responsible for the translocation of the substrate across the membrane. The chain is Petrobactin import system permease protein YclN (yclN) from Bacillus subtilis (strain 168).